Reading from the N-terminus, the 72-residue chain is Large ribosomal subunit protein bL32c (72 aa).

The disordered stretch occupies residues 49-72; sequence PPAPVSENWDDEAKGFGKDLDAAE. The segment covering 59–72 has biased composition (basic and acidic residues); the sequence is DEAKGFGKDLDAAE.

The protein belongs to the bacterial ribosomal protein bL32 family.

It localises to the plastid. The protein localises to the chloroplast. This Ostreococcus tauri protein is Large ribosomal subunit protein bL32c.